Consider the following 273-residue polypeptide: DNA repair protein RecO (273 aa).

The disordered stretch occupies residues 250 to 273 (NVGQNPSGKDDLNERRDVDGTGES). Positions 257–273 (GKDDLNERRDVDGTGES) are enriched in basic and acidic residues.

Belongs to the RecO family.

Its function is as follows. Involved in DNA repair and RecF pathway recombination. This Desulfitobacterium hafniense (strain DSM 10664 / DCB-2) protein is DNA repair protein RecO.